Here is a 940-residue protein sequence, read N- to C-terminus: Inter-alpha-trypsin inhibitor heavy chain H5 (940 aa).

The first 16 residues, 1–16, serve as a signal peptide directing secretion; that stretch reads MLPLLGLCFALPLCAG. Residues 35 to 161 enclose the VIT domain; that stretch reads IPRQVRLLQR…KAAFLLSYEE (127 aa). 2 N-linked (GlcNAc...) asparagine glycosylation sites follow: N97 and N127. Positions 207–227 are disordered; it reads NSRQRGSGRGPDDSGPPPSTV. N-linked (GlcNAc...) asparagine glycosylation is found at N231, N421, N508, N694, N778, and N795. Positions 295-478 constitute a VWFA domain; sequence NVVFVLDSSA…AQLIGFYDEI (184 aa).

Belongs to the ITIH family.

Its subcellular location is the secreted. In terms of biological role, may act as a tumor suppressor. This Bos taurus (Bovine) protein is Inter-alpha-trypsin inhibitor heavy chain H5 (ITIH5).